A 327-amino-acid polypeptide reads, in one-letter code: Delta(6)-protoilludene synthase HYPSUDRAFT_138665 (327 aa).

Residues Asp-79, Asn-215, Ser-219, and Glu-223 each contribute to the Mg(2+) site. The short motif at 79-83 (DEHTD) is the DDXXD motif element. 2 residues coordinate (2E,6E)-farnesyl diphosphate: Arg-304 and Tyr-305.

This sequence belongs to the terpene synthase family. Requires Mg(2+) as cofactor.

The enzyme catalyses (2E,6E)-farnesyl diphosphate = Delta(6)-protoilludene + diphosphate. Terpene cyclase that catalyzes the cyclization of farnesyl diphosphate (FPP) to delta(6)-protoilludene. This chain is Delta(6)-protoilludene synthase HYPSUDRAFT_138665, found in Hypholoma sublateritium (strain FD-334 SS-4).